Consider the following 444-residue polypeptide: Nuclear distribution protein PAC1 (444 aa).

Residues 59 to 87 (TAIARLQRRIMSLEQNIRDLREASIEMNA) are a coiled coil. WD repeat units lie at residues 113–152 (TLESPVTGVRLHPELAVVFVSTEQGRLHCFDLMDITLPLA), 156–199 (AHTR…KLLR), 204–251 (HEHV…CLKS), 254–293 (PHSDWVRCLDVYGEFLITGCQDSTLRLTHWPSGNGLSVGL), 307–347 (SLQD…RLPQ), 367–406 (GHDSWIKAVGSRGDHVFTASDDKSVICWNWTNGQCLKKWN), and 408–444 (IHQGFVTCIDLDDSNHPLKRKIMVTGGIDCKCHIFMQ).

It belongs to the WD repeat LIS1/nudF family. Self-associates. Interacts with NDL1 and dynein.

It localises to the cytoplasm. It is found in the cytoskeleton. Its subcellular location is the spindle pole. Functionally, positively regulates the activity of the minus-end directed microtubule motor protein dynein. Plays a central role in positioning the mitotic spindle at the bud neck during cell division. Targets cytoplasmic dynein to microtubule plus ends, thereby promoting dynein-mediated microtubule sliding along the bud cortex and consequently the movement of the mitotic spindle to the bud neck. In Zygosaccharomyces rouxii (strain ATCC 2623 / CBS 732 / NBRC 1130 / NCYC 568 / NRRL Y-229), this protein is Nuclear distribution protein PAC1.